A 166-amino-acid chain; its full sequence is NAD(P)H-quinone oxidoreductase subunit I, chloroplastic (166 aa).

2 4Fe-4S ferredoxin-type domains span residues 55–84 and 95–124; these read GRIH…VDWK and LNYS…MTEE. Residues Cys-64, Cys-67, Cys-70, Cys-74, Cys-104, Cys-107, Cys-110, and Cys-114 each contribute to the [4Fe-4S] cluster site.

This sequence belongs to the complex I 23 kDa subunit family. In terms of assembly, NDH is composed of at least 16 different subunits, 5 of which are encoded in the nucleus. [4Fe-4S] cluster is required as a cofactor.

The protein localises to the plastid. Its subcellular location is the chloroplast thylakoid membrane. It catalyses the reaction a plastoquinone + NADH + (n+1) H(+)(in) = a plastoquinol + NAD(+) + n H(+)(out). The enzyme catalyses a plastoquinone + NADPH + (n+1) H(+)(in) = a plastoquinol + NADP(+) + n H(+)(out). NDH shuttles electrons from NAD(P)H:plastoquinone, via FMN and iron-sulfur (Fe-S) centers, to quinones in the photosynthetic chain and possibly in a chloroplast respiratory chain. The immediate electron acceptor for the enzyme in this species is believed to be plastoquinone. Couples the redox reaction to proton translocation, and thus conserves the redox energy in a proton gradient. The chain is NAD(P)H-quinone oxidoreductase subunit I, chloroplastic from Lasianthaea macrocephala (Lipochaeta macrocephala).